We begin with the raw amino-acid sequence, 744 residues long: FNIP repeat-containing protein cigB (744 aa).

FNIP repeat units lie at residues 340–376 (FNQK…TVTT), 383–422 (FNQK…TVIL), 426–462 (FNQK…TVTR), 469–508 (FNQK…TITL), 512–550 (FNQK…TTVR), 555–594 (FNQK…TVIL), 598–635 (FNQK…VTTV), 641–678 (FNQK…VTTV), and 684–723 (FNQK…NVYI).

The sequence is that of FNIP repeat-containing protein cigB (cigB) from Dictyostelium discoideum (Social amoeba).